Here is a 265-residue protein sequence, read N- to C-terminus: Glutamate racemase (265 aa).

Substrate is bound by residues 7–8 (DS) and 39–40 (YG). The Proton donor/acceptor role is filled by C70. 71-72 (NT) serves as a coordination point for substrate. C177 (proton donor/acceptor) is an active-site residue.

It belongs to the aspartate/glutamate racemases family.

The enzyme catalyses L-glutamate = D-glutamate. The protein operates within cell wall biogenesis; peptidoglycan biosynthesis. Provides the (R)-glutamate required for cell wall biosynthesis. The chain is Glutamate racemase from Prochlorococcus marinus (strain NATL2A).